Here is a 238-residue protein sequence, read N- to C-terminus: Aliphatic sulfonates import ATP-binding protein SsuB (238 aa).

Residues 7–221 (VSLHQVHQQF…RPGDAAFASL (215 aa)) form the ABC transporter domain. 39–46 (GRSGSGKT) contributes to the ATP binding site.

It belongs to the ABC transporter superfamily. Aliphatic sulfonates importer (TC 3.A.1.17.2) family. As to quaternary structure, the complex is composed of two ATP-binding proteins (SsuB), two transmembrane proteins (SsuC) and a solute-binding protein (SsuA).

Its subcellular location is the cell inner membrane. It carries out the reaction ATP + H2O + aliphatic sulfonate-[sulfonate-binding protein]Side 1 = ADP + phosphate + aliphatic sulfonateSide 2 + [sulfonate-binding protein]Side 1.. In terms of biological role, part of the ABC transporter complex SsuABC involved in aliphatic sulfonates import. Responsible for energy coupling to the transport system. The sequence is that of Aliphatic sulfonates import ATP-binding protein SsuB from Granulibacter bethesdensis (strain ATCC BAA-1260 / CGDNIH1).